Consider the following 421-residue polypeptide: Extracellular signal-regulated kinase 1 (421 aa).

The region spanning 70 to 375 (YQILEIVGEG…VEDALKHPYL (306 aa)) is the Protein kinase domain. ATP-binding positions include 76–84 (VGEGAYGIV) and Lys-99. Catalysis depends on Asp-194, which acts as the Proton acceptor. Thr-230 is subject to Phosphothreonine. Residues 230–232 (TEY) carry the TXY motif. Residue Tyr-232 is modified to Phosphotyrosine.

This sequence belongs to the protein kinase superfamily. CMGC Ser/Thr protein kinase family. MAP kinase subfamily. Mg(2+) is required as a cofactor. Dually phosphorylated on Thr-230 and Tyr-232, which activates the enzyme.

It carries out the reaction L-seryl-[protein] + ATP = O-phospho-L-seryl-[protein] + ADP + H(+). The enzyme catalyses L-threonyl-[protein] + ATP = O-phospho-L-threonyl-[protein] + ADP + H(+). Its activity is regulated as follows. Activated by tyrosine and threonine phosphorylation. In Candida albicans (strain SC5314 / ATCC MYA-2876) (Yeast), this protein is Extracellular signal-regulated kinase 1 (CEK1).